Consider the following 148-residue polypeptide: uncharacterized protein (148 aa).

The signal sequence occupies residues 1–23; the sequence is MKALVAVSAVAVVALLGVSSAQA. Residues 22–45 form a disordered region; it reads QADPEADPGAGEANYGGPPSSPRL.

This sequence to M.leprae ML2452.

This is an uncharacterized protein from Mycobacterium bovis (strain ATCC BAA-935 / AF2122/97).